Consider the following 142-residue polypeptide: Protein archease (142 aa).

3 residues coordinate Ca(2+): Asp12, Asp141, and Leu142.

This sequence belongs to the archease family.

Its function is as follows. Activates the tRNA-splicing ligase complex by facilitating the enzymatic turnover of catalytic subunit RtcB. Acts by promoting the guanylylation of RtcB, a key intermediate step in tRNA ligation. Can also alter the NTP specificity of RtcB such that ATP, dGTP or ITP is used efficiently. The protein is Protein archease of Thermococcus gammatolerans (strain DSM 15229 / JCM 11827 / EJ3).